A 417-amino-acid chain; its full sequence is NADH-quinone oxidoreductase subunit D (417 aa).

Belongs to the complex I 49 kDa subunit family. NDH-1 is composed of 14 different subunits. Subunits NuoB, C, D, E, F, and G constitute the peripheral sector of the complex.

It localises to the cell inner membrane. The catalysed reaction is a quinone + NADH + 5 H(+)(in) = a quinol + NAD(+) + 4 H(+)(out). NDH-1 shuttles electrons from NADH, via FMN and iron-sulfur (Fe-S) centers, to quinones in the respiratory chain. The immediate electron acceptor for the enzyme in this species is believed to be ubiquinone. Couples the redox reaction to proton translocation (for every two electrons transferred, four hydrogen ions are translocated across the cytoplasmic membrane), and thus conserves the redox energy in a proton gradient. This is NADH-quinone oxidoreductase subunit D from Paraburkholderia phymatum (strain DSM 17167 / CIP 108236 / LMG 21445 / STM815) (Burkholderia phymatum).